The chain runs to 368 residues: Glutamate 5-kinase (368 aa).

Lys13 contacts ATP. 3 residues coordinate substrate: Ser54, Asp141, and Asn153. Position 173–174 (173–174 (SD)) interacts with ATP. Residues 278 to 355 (RGVITVDEGA…DEIEAILGYA (78 aa)) enclose the PUA domain.

Belongs to the glutamate 5-kinase family.

The protein resides in the cytoplasm. It carries out the reaction L-glutamate + ATP = L-glutamyl 5-phosphate + ADP. It participates in amino-acid biosynthesis; L-proline biosynthesis; L-glutamate 5-semialdehyde from L-glutamate: step 1/2. In terms of biological role, catalyzes the transfer of a phosphate group to glutamate to form L-glutamate 5-phosphate. The chain is Glutamate 5-kinase from Ruegeria sp. (strain TM1040) (Silicibacter sp.).